The chain runs to 571 residues: Proline--tRNA ligase (571 aa).

Belongs to the class-II aminoacyl-tRNA synthetase family. ProS type 1 subfamily. As to quaternary structure, homodimer.

The protein localises to the cytoplasm. The catalysed reaction is tRNA(Pro) + L-proline + ATP = L-prolyl-tRNA(Pro) + AMP + diphosphate. In terms of biological role, catalyzes the attachment of proline to tRNA(Pro) in a two-step reaction: proline is first activated by ATP to form Pro-AMP and then transferred to the acceptor end of tRNA(Pro). As ProRS can inadvertently accommodate and process non-cognate amino acids such as alanine and cysteine, to avoid such errors it has two additional distinct editing activities against alanine. One activity is designated as 'pretransfer' editing and involves the tRNA(Pro)-independent hydrolysis of activated Ala-AMP. The other activity is designated 'posttransfer' editing and involves deacylation of mischarged Ala-tRNA(Pro). The misacylated Cys-tRNA(Pro) is not edited by ProRS. The sequence is that of Proline--tRNA ligase from Proteus mirabilis (strain HI4320).